Reading from the N-terminus, the 192-residue chain is Pyridoxal 5'-phosphate synthase subunit PdxT (192 aa).

47–49 (GES) serves as a coordination point for L-glutamine. Residue Cys-79 is the Nucleophile of the active site. L-glutamine contacts are provided by residues Arg-106 and 134–135 (IR). Residues His-170 and Glu-172 each act as charge relay system in the active site.

This sequence belongs to the glutaminase PdxT/SNO family. In terms of assembly, in the presence of PdxS, forms a dodecamer of heterodimers. Only shows activity in the heterodimer.

The enzyme catalyses aldehydo-D-ribose 5-phosphate + D-glyceraldehyde 3-phosphate + L-glutamine = pyridoxal 5'-phosphate + L-glutamate + phosphate + 3 H2O + H(+). The catalysed reaction is L-glutamine + H2O = L-glutamate + NH4(+). Its pathway is cofactor biosynthesis; pyridoxal 5'-phosphate biosynthesis. Its function is as follows. Catalyzes the hydrolysis of glutamine to glutamate and ammonia as part of the biosynthesis of pyridoxal 5'-phosphate. The resulting ammonia molecule is channeled to the active site of PdxS. The protein is Pyridoxal 5'-phosphate synthase subunit PdxT of Geobacillus sp. (strain WCH70).